Reading from the N-terminus, the 245-residue chain is UPF0246 protein CE1889 (245 aa).

Positions 1 to 20 (MLILLPPSETKTPGGAGAPL) are disordered.

Belongs to the UPF0246 family.

This Corynebacterium efficiens (strain DSM 44549 / YS-314 / AJ 12310 / JCM 11189 / NBRC 100395) protein is UPF0246 protein CE1889.